The chain runs to 334 residues: Fe-S cluster assembly protein DRE2 (334 aa).

The N-terminal SAM-like domain stretch occupies residues 1-131; it reads MASTKTGLVL…ASIKAEPVAV (131 aa). Positions 132–228 are linker; that stretch reads PLRNHKKTTT…EDELVDENEM (97 aa). The segment at 135 to 229 is disordered; the sequence is NHKKTTTPGT…DELVDENEMR (95 aa). Residues 140–150 show a composition bias toward low complexity; that stretch reads TTPGTTTTAKK. Acidic residues-rich tracts occupy residues 182-192 and 215-227; these read DSEDEDEESEG and DSIE…DENE. Residues cysteine 238, cysteine 249, cysteine 252, and cysteine 254 each coordinate [2Fe-2S] cluster. Residues 238–254 form a fe-S binding site A region; the sequence is CGKSKTRRRKACKDCTC. 4 residues coordinate [4Fe-4S] cluster: cysteine 297, cysteine 300, cysteine 308, and cysteine 311. 2 short sequence motifs (cx2C motif) span residues 297–300 and 308–311; these read CGSC and CSGC. The segment at 297-311 is fe-S binding site B; that stretch reads CGSCTLGDAFRCSGC.

It belongs to the anamorsin family. In terms of assembly, monomer. Interacts with TAH18. Interacts with MIA40. [2Fe-2S] cluster serves as cofactor. The cofactor is [4Fe-4S] cluster.

It is found in the cytoplasm. The protein localises to the mitochondrion intermembrane space. Functionally, component of the cytosolic iron-sulfur (Fe-S) protein assembly (CIA) machinery required for the maturation of extramitochondrial Fe-S proteins. Part of an electron transfer chain functioning in an early step of cytosolic Fe-S biogenesis, facilitating the de novo assembly of a [4Fe-4S] cluster on the scaffold complex CFD1-NBP35. Electrons are transferred to DRE2 from NADPH via the FAD- and FMN-containing protein TAH18. TAH18-DRE2 are also required for the assembly of the diferric tyrosyl radical cofactor of ribonucleotide reductase (RNR), probably by providing electrons for reduction during radical cofactor maturation in the catalytic small subunit RNR2. In Zygosaccharomyces rouxii (strain ATCC 2623 / CBS 732 / NBRC 1130 / NCYC 568 / NRRL Y-229), this protein is Fe-S cluster assembly protein DRE2.